The chain runs to 795 residues: MAPSQKRKSLPDDDFIHTISDNDEPDILDEEEETVPAAVAGRPNKKARTAGAGAVKGKKNKKEKKGKKGGKSAAAGGDGEDGDEEEEEEVTGLWGANDADDGAMDSDFEFVAGGGGEDGLSGFDEEGWGFENAKKGVVGAGGAGQEVKSGVDLDEIIRRRREKKKGKGLEKVEEEEVEVEDMGEVDLDLDDEVLAEDGFGMGMEDGEGGVDEEDKGGEDDDEAASDNDSVATPVQHPDDEASEDDDEEDAEEEARRKEFFAAPEETENVGKKGGLSSFQGMSLSRPILRGLTSVGFTKPTPIQAKTIPIALMGKDVVGGAVTGSGKTAAFVVPILERLLYRPKKVPTTRVVVLTPTRELAIQCHSVATKLASHTDIKFCLAVGGLSLKVQEGELRLRPDVVIATPGRFIDHMRNSASFAVETVEILVLDEADRMLEDGFADELNEILTTLPKSRQTMLFSATMTSTVDKLIRVGLNKPARIMVDSQKQTAVTLAQEFVRLRPGREEKRMGYLGPYLQDPVHRTSHYLLQAEEDCSPDPDHLRLAGAFEHRAPWKHEPGSAFRDGKVNYLLATDLASRGLDIKGIDTVINYEAPQSLEIYVHRVGRTARAGRSGVAITLAAEPDRKVVKAAVRAGKAQGAKIISRVIDAADADKWQDQIDEMDDEIDEILQEEKEEKQLAQIEMQVKKGENLIKHEEEIHARPKRTWFETQEDKKKAKELGRAELNGVRDAMKKKGAGRLSNKDKKKLDSKAERSESKSTGWKKGRAERDGKGAVLNLKKVTKPKSKAPAGRKGRR.

2 disordered regions span residues 1-127 and 162-276; these read MAPS…DEEG and EKKK…GGLS. Over residues 21 to 34 the composition is skewed to acidic residues; that stretch reads DNDEPDILDEEEET. The segment covering 56–70 has biased composition (basic residues); the sequence is KGKKNKKEKKGKKGG. Composition is skewed to acidic residues over residues 78–90, 98–108, 172–195, 204–225, and 240–252; these read DGED…EEEV, DADDGAMDSDF, VEEE…EVLA, EDGE…EAAS, and EASE…DAEE. A Q motif motif is present at residues 276 to 304; the sequence is SSFQGMSLSRPILRGLTSVGFTKPTPIQA. Positions 307–481 constitute a Helicase ATP-binding domain; sequence IPIALMGKDV…RVGLNKPARI (175 aa). 320 to 327 is a binding site for ATP; sequence AVTGSGKT. The DEAD box signature appears at 429–432; sequence DEAD. Residues 466-684 enclose the Helicase C-terminal domain; the sequence is TVDKLIRVGL…EKQLAQIEMQ (219 aa). The disordered stretch occupies residues 703–795; sequence KRTWFETQED…KAPAGRKGRR (93 aa). Composition is skewed to basic and acidic residues over residues 710–721 and 740–756; these read QEDKKKAKELGR and SNKD…RSES. A compositionally biased stretch (basic residues) spans 779 to 795; the sequence is KVTKPKSKAPAGRKGRR.

It belongs to the DEAD box helicase family. DDX27/DRS1 subfamily. In terms of assembly, associates with pre-ribosomal particles.

It is found in the nucleus. The protein resides in the nucleolus. The enzyme catalyses ATP + H2O = ADP + phosphate + H(+). Functionally, ATP-binding RNA helicase involved in ribosome assembly. The protein is ATP-dependent RNA helicase DRS1 (DRS1) of Chaetomium globosum (strain ATCC 6205 / CBS 148.51 / DSM 1962 / NBRC 6347 / NRRL 1970) (Soil fungus).